The chain runs to 235 residues: Phosphoribosylaminoimidazole-succinocarboxamide synthase (235 aa).

This sequence belongs to the SAICAR synthetase family.

The enzyme catalyses 5-amino-1-(5-phospho-D-ribosyl)imidazole-4-carboxylate + L-aspartate + ATP = (2S)-2-[5-amino-1-(5-phospho-beta-D-ribosyl)imidazole-4-carboxamido]succinate + ADP + phosphate + 2 H(+). The protein operates within purine metabolism; IMP biosynthesis via de novo pathway; 5-amino-1-(5-phospho-D-ribosyl)imidazole-4-carboxamide from 5-amino-1-(5-phospho-D-ribosyl)imidazole-4-carboxylate: step 1/2. The protein is Phosphoribosylaminoimidazole-succinocarboxamide synthase of Clostridium botulinum (strain Eklund 17B / Type B).